A 769-amino-acid chain; its full sequence is Apoptotic enhancer 1 protein (769 aa).

3 disordered regions span residues 69–88, 265–396, and 451–518; these read PVRVVAQPPPPHPQALSQQY, SVEP…LDES, and PQLP…RSDD. Low complexity predominate over residues 275-284; it reads QQQQPSPQMM. A compositionally biased stretch (basic and acidic residues) spans 285–295; that stretch reads KSEEFSEKRDL. The segment covering 339 to 353 has biased composition (low complexity); sequence STDPHSNHSSPSTSS. Polar residues-rich tracts occupy residues 354-378, 453-467, and 474-491; these read QKAPTLITFSPPSFEQKINSSTMTR, LPTSQEEPSAITSET, and NSESKQVATSSDSTNNLE. ANK repeat units lie at residues 585 to 617 and 618 to 652; these read EGITALHNAICAGHYEIVRFLIENDADVNAQDS and DGWTPLHCAASCNNLPMVRQLVEGGGCVLASTLSD. Residues 684 to 746 enclose the SH3 domain; that stretch reads INTGKVYAAY…PRTYLALYPS (63 aa).

It belongs to the iASPP family. In terms of assembly, interacts with cep-1/p53; the interaction inhibits pro-apoptotic activity of cep-1.

Its subcellular location is the nucleus. Functionally, negetively regulates apoptosis via its interaction with cep-1. This Caenorhabditis elegans protein is Apoptotic enhancer 1 protein.